A 218-amino-acid chain; its full sequence is Large ribosomal subunit protein uL3 (218 aa).

Residues 126–170 form a disordered region; it reads HGFSRGPMSHGSKNHREPGSTGAGTTPGRIYPGKRMAGRYGGKKR.

It belongs to the universal ribosomal protein uL3 family. Part of the 50S ribosomal subunit. Forms a cluster with proteins L14 and L19.

In terms of biological role, one of the primary rRNA binding proteins, it binds directly near the 3'-end of the 23S rRNA, where it nucleates assembly of the 50S subunit. The sequence is that of Large ribosomal subunit protein uL3 from Prochlorococcus marinus (strain MIT 9313).